The primary structure comprises 236 residues: MADS-box transcription factor 3 (236 aa).

Residues 1 to 61 enclose the MADS-box domain; the sequence is MGRGKIEIKR…GRLYEYANNS (61 aa). The K-box domain maps to 87-178; sequence AQHYQQESSK…RSKVVENERG (92 aa).

As to expression, expressed in lemmas, paleas and lodicules.

It is found in the nucleus. Probable transcription factor involved in the development of floral organs. Acts as C-class protein in association with MADS58. Involved in the control of lodicule number (whorl 2), stamen specification (whorl 3) and floral meristem determinacy (whorl 4), but not in the regulation of carpel morphogenesis. Plays a more predominant role in controlling lodicule development and in specifying stamen identity than MADS58. This Oryza sativa subsp. japonica (Rice) protein is MADS-box transcription factor 3 (MADS3).